The chain runs to 743 residues: Putative pentatricopeptide repeat-containing protein At1g68930 (743 aa).

PPR repeat units follow at residues 40–70 (ETFL…IPQP), 71–101 (NLFS…LPDR), 102–132 (DGVT…MMRD), 138–172 (TRVT…GFES), 173–203 (YLLV…LDDR), 204–233 (NTVM…GMEK), 234–268 (DSVS…GLKM), 269–303 (DQYP…NFQD), 304–334 (HIYV…MKQK), 335–369 (NVVS…GIDP), 370–404 (DHYT…GLIH), 405–435 (YVTV…MNVR), 436–470 (DAVS…GLKP), 471–506 (DGVT…GIVP), and 507–537 (SIGH…MPFP). A type E motif region spans residues 542–617 (GWTTLLSACR…EPGQSWIKWK (76 aa)). The tract at residues 618 to 648 (GKLHSFSADDESSPYLDQIYAKLEELNNKII) is type E(+) motif. Positions 649–743 (DNGYKPDTSF…DGTCSCGDFW (95 aa)) are type DYW motif.

It belongs to the PPR family. PCMP-H subfamily.

The protein is Putative pentatricopeptide repeat-containing protein At1g68930 (PCMP-H22) of Arabidopsis thaliana (Mouse-ear cress).